Reading from the N-terminus, the 495-residue chain is Transmembrane protein 161A (495 aa).

Positions methionine 1 to alanine 28 are cleaved as a signal peptide. Residues arginine 29 to arginine 99 lie on the Extracellular side of the membrane. The N-linked (GlcNAc...) asparagine glycan is linked to asparagine 34. A helical membrane pass occupies residues phenylalanine 100 to phenylalanine 120. Topologically, residues threonine 121 to asparagine 135 are cytoplasmic. Residues isoleucine 136–methionine 156 traverse the membrane as a helical segment. Residues serine 157–glutamate 167 lie on the Extracellular side of the membrane. Residues arginine 168 to valine 188 form a helical membrane-spanning segment. Residues arginine 189 to serine 227 are Cytoplasmic-facing. A helical transmembrane segment spans residues valine 228 to leucine 248. Topologically, residues arginine 249–proline 265 are extracellular. A helical transmembrane segment spans residues methionine 266–isoleucine 286. At lysine 287 to threonine 305 the chain is on the cytoplasmic side. A helical transmembrane segment spans residues leucine 306–leucine 326. Residues arginine 327–arginine 367 are Extracellular-facing. A helical transmembrane segment spans residues isoleucine 368–phenylalanine 388. Residues serine 389–glycine 465 are Cytoplasmic-facing. Residues isoleucine 466 to isoleucine 486 traverse the membrane as a helical segment. The Extracellular portion of the chain corresponds to tyrosine 487–asparagine 495.

It belongs to the TMEM161 family.

The protein localises to the membrane. Its function is as follows. May play a role in protection against oxidative stress. This chain is Transmembrane protein 161A (tmem161a), found in Danio rerio (Zebrafish).